A 406-amino-acid polypeptide reads, in one-letter code: CinA-like protein (406 aa).

The protein belongs to the CinA family.

The polypeptide is CinA-like protein (Pseudothermotoga lettingae (strain ATCC BAA-301 / DSM 14385 / NBRC 107922 / TMO) (Thermotoga lettingae)).